The chain runs to 466 residues: Argininosuccinate lyase (466 aa).

The protein belongs to the lyase 1 family. Argininosuccinate lyase subfamily.

It is found in the cytoplasm. The enzyme catalyses 2-(N(omega)-L-arginino)succinate = fumarate + L-arginine. It participates in amino-acid biosynthesis; L-arginine biosynthesis; L-arginine from L-ornithine and carbamoyl phosphate: step 3/3. The polypeptide is Argininosuccinate lyase (Campylobacter concisus (strain 13826)).